Here is a 1521-residue protein sequence, read N- to C-terminus: Lysophospholipase NTE1 (1521 aa).

Residues 1-50 lie on the Cytoplasmic side of the membrane; it reads MDVVNSTARAAVTSATAVTAVTGTGDRHPNPLSSAVAAASDVANAHGSSS. A helical membrane pass occupies residues 51–71; sequence WLGLFARVVLWLLQFVSMVLY. Residues 72-96 are Lumenal-facing; that stretch reads YAIKLATISVPTLLYTLFSTSLTVT. The chain crosses the membrane as a helical span at residues 97–117; that stretch reads MNATTLMLIVAAMIGAISWVV. The Cytoplasmic segment spans residues 118-1521; sequence RYRYLNMYSR…RTMAPRRASI (1404 aa). Disordered regions lie at residues 280-301, 315-372, and 738-768; these read HADEDNSEPGTTTHSGLFPNYP, SVPN…SAHP, and HAMDSAQSIRSPQRSPQPFAESMRSGNKVDD. 2 stretches are compositionally biased toward polar residues: residues 316–334 and 738–753; these read VPNTPQMDASASSSANNLP and HAMDSAQSIRSPQRSP. A nucleoside 3',5'-cyclic phosphate-binding positions include 670-789 and 837-957; these read PASP…GGLA and RLTN…IASR. The PNPLA domain maps to 1217–1381; the sequence is LVLGGGGARG…VDNLTVSHMK (165 aa). The GXGXXG motif lies at 1221–1226; sequence GGGARG. The GXSXG signature appears at 1248 to 1252; that stretch reads GTSIG. The Nucleophile role is filled by S1250. Residue D1368 is the Proton acceptor of the active site. A DGA/G motif is present at residues 1368-1370; that stretch reads DGG.

It belongs to the NTE family.

It is found in the endoplasmic reticulum membrane. The enzyme catalyses a 1-acyl-sn-glycero-3-phosphocholine + H2O = sn-glycerol 3-phosphocholine + a fatty acid + H(+). Inhibited by organophosphorus esters. In terms of biological role, intracellular phospholipase B that catalyzes the double deacylation of phosphatidylcholine (PC) to glycerophosphocholine (GroPCho). Plays an important role in membrane lipid homeostasis. Responsible for the rapid PC turnover in response to inositol, elevated temperatures, or when choline is present in the growth medium. This Chaetomium globosum (strain ATCC 6205 / CBS 148.51 / DSM 1962 / NBRC 6347 / NRRL 1970) (Soil fungus) protein is Lysophospholipase NTE1 (NTE1).